The primary structure comprises 594 residues: UvrABC system protein C (594 aa).

One can recognise a GIY-YIG domain in the interval 14-91 (DQPGCYLMKD…IKKHDPKYNI (78 aa)). The region spanning 196–231 (KEVRSELETKMYEASEKLEFERAKELRDQIAHIDAI) is the UVR domain.

Belongs to the UvrC family. As to quaternary structure, interacts with UvrB in an incision complex.

The protein resides in the cytoplasm. In terms of biological role, the UvrABC repair system catalyzes the recognition and processing of DNA lesions. UvrC both incises the 5' and 3' sides of the lesion. The N-terminal half is responsible for the 3' incision and the C-terminal half is responsible for the 5' incision. In Bacillus thuringiensis (strain Al Hakam), this protein is UvrABC system protein C.